The chain runs to 372 residues: DNA replication and repair protein RecF (372 aa).

G30–T37 provides a ligand contact to ATP.

It belongs to the RecF family.

The protein resides in the cytoplasm. Its function is as follows. The RecF protein is involved in DNA metabolism; it is required for DNA replication and normal SOS inducibility. RecF binds preferentially to single-stranded, linear DNA. It also seems to bind ATP. This is DNA replication and repair protein RecF from Heliobacterium modesticaldum (strain ATCC 51547 / Ice1).